Here is a 281-residue protein sequence, read N- to C-terminus: ATP phosphoribosyltransferase (281 aa).

It belongs to the ATP phosphoribosyltransferase family. Long subfamily. Requires Mg(2+) as cofactor.

It is found in the cytoplasm. The catalysed reaction is 1-(5-phospho-beta-D-ribosyl)-ATP + diphosphate = 5-phospho-alpha-D-ribose 1-diphosphate + ATP. Its pathway is amino-acid biosynthesis; L-histidine biosynthesis; L-histidine from 5-phospho-alpha-D-ribose 1-diphosphate: step 1/9. Feedback inhibited by histidine. Functionally, catalyzes the condensation of ATP and 5-phosphoribose 1-diphosphate to form N'-(5'-phosphoribosyl)-ATP (PR-ATP). Has a crucial role in the pathway because the rate of histidine biosynthesis seems to be controlled primarily by regulation of HisG enzymatic activity. The protein is ATP phosphoribosyltransferase of Corynebacterium aurimucosum (strain ATCC 700975 / DSM 44827 / CIP 107346 / CN-1) (Corynebacterium nigricans).